A 358-amino-acid chain; its full sequence is Methylthioribose-1-phosphate isomerase (358 aa).

Substrate-binding positions include 54–56 (RGA), Arg96, and Gln205. Catalysis depends on Asp246, which acts as the Proton donor. Substrate is bound at residue 256-257 (NK).

Belongs to the eIF-2B alpha/beta/delta subunits family. MtnA subfamily.

The catalysed reaction is 5-(methylsulfanyl)-alpha-D-ribose 1-phosphate = 5-(methylsulfanyl)-D-ribulose 1-phosphate. The protein operates within amino-acid biosynthesis; L-methionine biosynthesis via salvage pathway; L-methionine from S-methyl-5-thio-alpha-D-ribose 1-phosphate: step 1/6. Catalyzes the interconversion of methylthioribose-1-phosphate (MTR-1-P) into methylthioribulose-1-phosphate (MTRu-1-P). This Pseudomonas fluorescens (strain Pf0-1) protein is Methylthioribose-1-phosphate isomerase.